A 124-amino-acid polypeptide reads, in one-letter code: Small ribosomal subunit protein uS12 (124 aa).

Positions 1–27 (MPTINQLIRKPRKSQTEKTASPALQNC) are disordered. Polar residues predominate over residues 17 to 27 (EKTASPALQNC). At Asp-89 the chain carries 3-methylthioaspartic acid.

Belongs to the universal ribosomal protein uS12 family. As to quaternary structure, part of the 30S ribosomal subunit. Contacts proteins S8 and S17. May interact with IF1 in the 30S initiation complex.

In terms of biological role, with S4 and S5 plays an important role in translational accuracy. Its function is as follows. Interacts with and stabilizes bases of the 16S rRNA that are involved in tRNA selection in the A site and with the mRNA backbone. Located at the interface of the 30S and 50S subunits, it traverses the body of the 30S subunit contacting proteins on the other side and probably holding the rRNA structure together. The combined cluster of proteins S8, S12 and S17 appears to hold together the shoulder and platform of the 30S subunit. The sequence is that of Small ribosomal subunit protein uS12 from Borreliella afzelii (strain PKo) (Borrelia afzelii).